The sequence spans 388 residues: Succinate--CoA ligase [ADP-forming] subunit beta (388 aa).

In terms of domain architecture, ATP-grasp spans 9–245 (KALLKKYGVS…KSQENERELK (237 aa)). Residues Lys46, 53–55 (GRG), Glu100, Tyr103, and Glu108 each bind ATP. Mg(2+) is bound by residues Asn200 and Asp214. Substrate contacts are provided by residues Asn265 and 322-324 (GIV).

This sequence belongs to the succinate/malate CoA ligase beta subunit family. As to quaternary structure, heterotetramer of two alpha and two beta subunits. The cofactor is Mg(2+).

It catalyses the reaction succinate + ATP + CoA = succinyl-CoA + ADP + phosphate. The catalysed reaction is GTP + succinate + CoA = succinyl-CoA + GDP + phosphate. It participates in carbohydrate metabolism; tricarboxylic acid cycle; succinate from succinyl-CoA (ligase route): step 1/1. In terms of biological role, succinyl-CoA synthetase functions in the citric acid cycle (TCA), coupling the hydrolysis of succinyl-CoA to the synthesis of either ATP or GTP and thus represents the only step of substrate-level phosphorylation in the TCA. The beta subunit provides nucleotide specificity of the enzyme and binds the substrate succinate, while the binding sites for coenzyme A and phosphate are found in the alpha subunit. The polypeptide is Succinate--CoA ligase [ADP-forming] subunit beta (Acinetobacter baylyi (strain ATCC 33305 / BD413 / ADP1)).